Reading from the N-terminus, the 186-residue chain is MLALISRLLDWFRSLFWKEEMELTLVGLQYSGKTTFVNVIASGQFSEDMIPTVGFNMRKVTKGNVTIKIWDIGGQPRYRSMWERYCRGVNAIVYMIDAADREKIEASRNELHNLLDKPQLQGIPVLVLGNKRDLPNALDEKQLIEKMNLSAIQDREICCYSISCKEKDNIDITLQWLIQYSKSRRS.

Residues 1 to 19 (MLALISRLLDWFRSLFWKE) constitute an intramembrane region (note=Mediates targeting to membranes). GTP-binding positions include 29 to 35 (QYSGKTT), 71 to 75 (DIGGQ), and 130 to 133 (NKRD). Lys141 participates in a covalent cross-link: Glycyl lysine isopeptide (Lys-Gly) (interchain with G-Cter in ubiquitin).

Belongs to the small GTPase superfamily. Arf family. As to quaternary structure, interacts with tubulin. Interacts with BORCS5; recruits ARL8B to lysosomes. Interacts with VPS41; the interaction mediates the recruitment of the HOPS complex to lysosomes. Interacts (GTP-bound form) with PLEKHM2 (via RUN domain); the interaction is required to recruit the motor protein kinesin-1 on lysosomes. Interacts (GTP-bound form) with PLEKHM1 (via RUN domain); the interaction is required for PLEKHM1 localization to lysosomes and for ARL8B function in delivery and degradation of endocytic and autophagic cargo in lysosomes. PLEKHM1 and PLEKHM2 compete for interaction with ARL8B. Interacts (GTP-bound form) with RUFY1; the interaction is required for RUFY1 endosomal location. When GTP-bound, interacts with RUFY3 and RUFY4, but not with RUFY1, nor RUFY2. Ubiquitinated at Lys-141 by RNF167, leading to its degradation.

It localises to the late endosome membrane. Its subcellular location is the lysosome membrane. The protein resides in the cytoplasm. It is found in the cytoskeleton. The protein localises to the spindle. It localises to the cell projection. Its subcellular location is the axon. The protein resides in the synapse. It is found in the cytolytic granule membrane. The protein localises to the early endosome membrane. The catalysed reaction is GTP + H2O = GDP + phosphate + H(+). Small GTPase which cycles between active GTP-bound and inactive GDP-bound states. In its active state, binds to a variety of effector proteins playing a key role in the regulation of lysosomal positioning which is important for nutrient sensing, natural killer cell-mediated cytotoxicity and antigen presentation. Along with its effectors, orchestrates lysosomal transport and fusion. Localizes specifically to lysosomal membranes and mediates anterograde lysosomal motility by recruiting PLEKHM2, which in turn recruits the motor protein kinesin-1 on lysosomes. Required for lysosomal and cytolytic granule exocytosis. Critical factor involved in NK cell-mediated cytotoxicity. Drives the polarization of cytolytic granules and microtubule-organizing centers (MTOCs) toward the immune synapse between effector NK lymphocytes and target cells. In neurons, mediates the anterograde axonal long-range transport of presynaptic lysosome-related vesicles required for presynaptic biogenesis and synaptic function. Also acts as a regulator of endosome to lysosome trafficking pathways of special significance for host defense. Recruits RUFY1 onto early endosomes regulating endosomes to trans-Golgi network proteins retrieval. Regulates cargo trafficking to lysosomes by binding to PLEKHM1 and recruiting the HOPS subunit VPS41, resulting in functional assembly of the HOPS complex on lysosomal membranes. Plays an important role in cargo delivery to lysosomes for antigen presentation and microbial killing. Directs the intersection of CD1d with lipid antigens in lysosomes, and plays a role in intersecting phagosomes with lysosomes to generate phagolysosomes that kill microbes. Involved in the process of MHC II presentation. Regulates the delivery of antigens to lysosomes and the formation of MHC II-peptide complexes through the recruitment of the HOPS complex to lysosomes allowing the fusion of late endosomes to lysosomes. May play a role in chromosome segregation. The polypeptide is ADP-ribosylation factor-like protein 8B (ARL8B) (Macaca fascicularis (Crab-eating macaque)).